The chain runs to 276 residues: Undecaprenyl-diphosphatase 2 (276 aa).

Transmembrane regions (helical) follow at residues 1–21 (MSLW…LFPV), 44–64 (QLLP…LWYF), 87–107 (GHLM…GLLL), 114–134 (VFHD…LLWL), 150–170 (LTFK…IPGF), 190–210 (AAEF…LLEL), 222–242 (DALL…RFLM), and 251–271 (LASF…WFMF).

It belongs to the UppP family.

It is found in the cell inner membrane. It catalyses the reaction di-trans,octa-cis-undecaprenyl diphosphate + H2O = di-trans,octa-cis-undecaprenyl phosphate + phosphate + H(+). Functionally, catalyzes the dephosphorylation of undecaprenyl diphosphate (UPP). Confers resistance to bacitracin. The chain is Undecaprenyl-diphosphatase 2 from Burkholderia thailandensis (strain ATCC 700388 / DSM 13276 / CCUG 48851 / CIP 106301 / E264).